Here is a 323-residue protein sequence, read N- to C-terminus: MISTTSLFAPVDQDLRLLTDNLKRLVGARHPILGAAAEHLFEAGGKRVRPAIVLLVSRATLLDQELTARHRRLAEITEMIHTASLVHDDVVDEADLRRNVPTVNSLFDNRVAVLAGDFLFAQSSWYLANLDNLEVVKLLSEVIRDFAEGEILQSINRFDTDTDLETYLEKSYFKTASLIANSAKAAGVLSDAPRDVCDHLYEYGKHLGLAFQIVDDILDFTSPTEVLGKPAGSDLISGNITAPALFAMEKYPLLGKLIEREFAQAGDLEQALELVEQGDGIRRSRELAANQAQLARQHLSVLEMSAPRESLLELVDYVLGRLH.

Isopentenyl diphosphate contacts are provided by K46, R49, and H81. Residues D88 and D92 each coordinate Mg(2+). An all-trans-polyprenyl diphosphate is bound at residue R97. An isopentenyl diphosphate-binding site is contributed by R98. Positions 174, 175, and 212 each coordinate an all-trans-polyprenyl diphosphate.

This sequence belongs to the FPP/GGPP synthase family. It depends on Mg(2+) as a cofactor.

Functionally, possible role in synthesis of the nonaprenyl side chain of plastoquinone or in synthesis of other prenyl chains such as undekaprenyl pyrophosphate. The sequence is that of Prenyl transferase (preA) from Synechocystis sp. (strain ATCC 27184 / PCC 6803 / Kazusa).